We begin with the raw amino-acid sequence, 151 residues long: Large ribosomal subunit protein bL9 (151 aa).

It belongs to the bacterial ribosomal protein bL9 family.

Its function is as follows. Binds to the 23S rRNA. This is Large ribosomal subunit protein bL9 from Desulfosudis oleivorans (strain DSM 6200 / JCM 39069 / Hxd3) (Desulfococcus oleovorans).